A 247-amino-acid chain; its full sequence is LHFPL tetraspan subfamily member 4 protein (247 aa).

4 helical membrane passes run 22-42 (IGVLWAIFTICFAIINVVVFI), 97-117 (FFVLLSMVLILGCITCFSLFF), 127-147 (ICAWMQLLAALCLVLGCMIFP), and 178-198 (ILAIIGILNALILSFLAFVLG).

Belongs to the LHFP family. In terms of assembly, interacts with GABA(A) receptor subunits. Identified in a complex of 720 kDa composed of LHFPL4, NLGN2, GABRA1, GABRB2, GABRG2 and GABRB3. Interacts with GABRB3. Interacts with GABRA2. Interacts with GABRG2. Interacts with GABRA1. Interacts with NLGN2; leading to mutual regulation of protein level and synaptic clustering.

The protein localises to the cell projection. The protein resides in the dendrite. It localises to the postsynaptic cell membrane. Its function is as follows. Plays a role in the regulation of inhibitory synapse formation and function by being involved in maintening gamma-aminobutyric acid receptors (GABAARs) clustering and their associated scaffold proteins at inhibitory synaptic sites. Acts in concert with NLGN2 to recruit or stabilize GABAARs. The sequence is that of LHFPL tetraspan subfamily member 4 protein from Homo sapiens (Human).